The sequence spans 135 residues: Protein Wnt-7c (135 aa).

Intrachain disulfides connect cysteine 3–cysteine 17 and cysteine 5–cysteine 12. The O-palmitoleoyl serine; by PORCN moiety is linked to residue serine 9. N-linked (GlcNAc...) asparagine glycosylation is found at asparagine 62, asparagine 85, and asparagine 98. 3 disulfide bridges follow: cysteine 81-cysteine 112, cysteine 97-cysteine 107, and cysteine 134-cysteine 135.

It belongs to the Wnt family. Palmitoleoylation is required for efficient binding to frizzled receptors. Depalmitoleoylation leads to Wnt signaling pathway inhibition.

Its subcellular location is the secreted. The protein resides in the extracellular space. It is found in the extracellular matrix. In terms of biological role, ligand for members of the frizzled family of seven transmembrane receptors. Probable developmental protein. May be a signaling molecule which affects the development of discrete regions of tissues. Is likely to signal over only few cell diameters. This Xenopus laevis (African clawed frog) protein is Protein Wnt-7c (wnt7c).